We begin with the raw amino-acid sequence, 634 residues long: Proline and serine-rich protein 3 (634 aa).

Disordered stretches follow at residues M1–N69, F81–A142, D185–K242, V368–P455, and F472–K534. Residues R15 to P24 are compositionally biased toward polar residues. Composition is skewed to low complexity over residues E40–E56, V128–S140, and D185–S202. Over residues V203–P215 the composition is skewed to polar residues. Residues V368 to P377 are compositionally biased toward low complexity. A compositionally biased stretch (pro residues) spans A378 to A399. Residues V436 to D448 show a composition bias toward polar residues. The span at P503–K515 shows a compositional bias: basic and acidic residues. A Phosphoserine modification is found at S588.

The protein resides in the cytoplasm. Its subcellular location is the cytoskeleton. The protein localises to the microtubule organizing center. It localises to the centrosome. This chain is Proline and serine-rich protein 3 (Proser3), found in Mus musculus (Mouse).